Reading from the N-terminus, the 221-residue chain is Lipoprotein-releasing system ATP-binding protein LolD (221 aa).

The ABC transporter domain occupies 6 to 220 (LTLKNVSKHY…YKLKHGALNM (215 aa)). Position 42-49 (42-49 (GSSGSGKS)) interacts with ATP.

This sequence belongs to the ABC transporter superfamily. Lipoprotein translocase (TC 3.A.1.125) family. In terms of assembly, the complex is composed of two ATP-binding proteins (LolD) and two transmembrane proteins (LolC and LolE).

Its subcellular location is the cell inner membrane. In terms of biological role, part of the ABC transporter complex LolCDE involved in the translocation of mature outer membrane-directed lipoproteins, from the inner membrane to the periplasmic chaperone, LolA. Responsible for the formation of the LolA-lipoprotein complex in an ATP-dependent manner. The chain is Lipoprotein-releasing system ATP-binding protein LolD from Rickettsia bellii (strain RML369-C).